The following is a 303-amino-acid chain: MVPHVPEGCSVQQQLVCSVIPPLNSERRKGQAGRVGIVGGSAEYTGAPYFAAMAALRTGADLVHVFCHPSAATAIKAYSPELIVHPTLDAAVTCLPRLHAVVVGPGLGRDVEASWMPTLFNRIREQGLPVVVDADGLFYVTQNPDLVRGYSRAILTPNAVELDRLYRAVLGSPPRENAVPELARALGHVTVLAKGSEDIISDGHRLLRCTEQGSPRRCGGQGDLVSGSLALFAFWSHSAHDTPGEASKRQNSEYGPAMIAALGAAMLVRRCGRLAFQKMARSTLSSDMLAEVRTAFSMLFPVD.

One can recognise a YjeF C-terminal domain in the interval 12–299 (QQQLVCSVIP…AEVRTAFSML (288 aa)). Residues Gly-106 and 158–164 (NAVELDR) contribute to the (6S)-NADPHX site. ATP-binding positions include 194 to 198 (KGSED) and 213 to 222 (GSPRRCGGQG). Asp-223 is a binding site for (6S)-NADPHX.

It belongs to the NnrD/CARKD family. It depends on Mg(2+) as a cofactor.

It catalyses the reaction (6S)-NADHX + ATP = ADP + phosphate + NADH + H(+). It carries out the reaction (6S)-NADPHX + ATP = ADP + phosphate + NADPH + H(+). In terms of biological role, catalyzes the dehydration of the S-form of NAD(P)HX at the expense of ATP, which is converted to ADP. Together with NAD(P)HX epimerase, which catalyzes the epimerization of the S- and R-forms, the enzyme allows the repair of both epimers of NAD(P)HX, a damaged form of NAD(P)H that is a result of enzymatic or heat-dependent hydration. This Ixodes scapularis (Black-legged tick) protein is ATP-dependent (S)-NAD(P)H-hydrate dehydratase.